The sequence spans 360 residues: Phosphoserine aminotransferase (360 aa).

Arg41 contacts L-glutamate. Residues 75–76 (AS), Trp101, Thr151, Asp171, and Gln194 contribute to the pyridoxal 5'-phosphate site. Lys195 is subject to N6-(pyridoxal phosphate)lysine. 236-237 (NT) is a pyridoxal 5'-phosphate binding site.

Belongs to the class-V pyridoxal-phosphate-dependent aminotransferase family. SerC subfamily. In terms of assembly, homodimer. Requires pyridoxal 5'-phosphate as cofactor.

It localises to the cytoplasm. It carries out the reaction O-phospho-L-serine + 2-oxoglutarate = 3-phosphooxypyruvate + L-glutamate. The enzyme catalyses 4-(phosphooxy)-L-threonine + 2-oxoglutarate = (R)-3-hydroxy-2-oxo-4-phosphooxybutanoate + L-glutamate. It participates in amino-acid biosynthesis; L-serine biosynthesis; L-serine from 3-phospho-D-glycerate: step 2/3. Its pathway is cofactor biosynthesis; pyridoxine 5'-phosphate biosynthesis; pyridoxine 5'-phosphate from D-erythrose 4-phosphate: step 3/5. In terms of biological role, catalyzes the reversible conversion of 3-phosphohydroxypyruvate to phosphoserine and of 3-hydroxy-2-oxo-4-phosphonooxybutanoate to phosphohydroxythreonine. In Herpetosiphon aurantiacus (strain ATCC 23779 / DSM 785 / 114-95), this protein is Phosphoserine aminotransferase.